Here is a 224-residue protein sequence, read N- to C-terminus: Ribonuclease HII (224 aa).

Positions 36–224 (RGVAGVDEVG…RRSFLRRFLG (189 aa)) constitute an RNase H type-2 domain. A divalent metal cation-binding residues include Asp-42, Glu-43, and Asp-138.

This sequence belongs to the RNase HII family. Mn(2+) serves as cofactor. Requires Mg(2+) as cofactor.

The protein resides in the cytoplasm. It carries out the reaction Endonucleolytic cleavage to 5'-phosphomonoester.. Functionally, endonuclease that specifically degrades the RNA of RNA-DNA hybrids. This Parasynechococcus marenigrum (strain WH8102) protein is Ribonuclease HII.